The sequence spans 450 residues: UPF0210 protein CPF_1748 (450 aa).

The protein belongs to the UPF0210 family. In terms of assembly, homodimer.

The chain is UPF0210 protein CPF_1748 from Clostridium perfringens (strain ATCC 13124 / DSM 756 / JCM 1290 / NCIMB 6125 / NCTC 8237 / Type A).